The primary structure comprises 500 residues: Lysine--tRNA ligase (500 aa).

Positions 410 and 417 each coordinate Mg(2+).

This sequence belongs to the class-II aminoacyl-tRNA synthetase family. Homodimer. Requires Mg(2+) as cofactor.

The protein resides in the cytoplasm. It carries out the reaction tRNA(Lys) + L-lysine + ATP = L-lysyl-tRNA(Lys) + AMP + diphosphate. This chain is Lysine--tRNA ligase, found in Shewanella baltica (strain OS155 / ATCC BAA-1091).